We begin with the raw amino-acid sequence, 236 residues long: Large ribosomal subunit protein uL1 (236 aa).

This sequence belongs to the universal ribosomal protein uL1 family. In terms of assembly, part of the 50S ribosomal subunit.

Its function is as follows. Binds directly to 23S rRNA. The L1 stalk is quite mobile in the ribosome, and is involved in E site tRNA release. Protein L1 is also a translational repressor protein, it controls the translation of the L11 operon by binding to its mRNA. This Acidobacterium capsulatum (strain ATCC 51196 / DSM 11244 / BCRC 80197 / JCM 7670 / NBRC 15755 / NCIMB 13165 / 161) protein is Large ribosomal subunit protein uL1.